Consider the following 264-residue polypeptide: NAD-capped RNA hydrolase NudC (264 aa).

Zn(2+)-binding residues include Cys-99 and Cys-102. Glu-112 is a binding site for substrate. Positions 117 and 120 each coordinate Zn(2+). Tyr-125 contributes to the substrate binding site. One can recognise a Nudix hydrolase domain in the interval 126-253 (PVICPSIIVA…TIARKLIHVT (128 aa)). Positions 162, 178, and 182 each coordinate a divalent metal cation. Residues 163–184 (GFVEVGETFEQAVQREVFEETG) carry the Nudix box motif. 196 to 203 (QPWAFPNS) provides a ligand contact to substrate. Residue Glu-223 coordinates a divalent metal cation. Position 246 (Ala-246) interacts with substrate.

This sequence belongs to the Nudix hydrolase family. NudC subfamily. In terms of assembly, homodimer. Mg(2+) is required as a cofactor. Mn(2+) serves as cofactor. It depends on Zn(2+) as a cofactor.

It carries out the reaction a 5'-end NAD(+)-phospho-ribonucleoside in mRNA + H2O = a 5'-end phospho-adenosine-phospho-ribonucleoside in mRNA + beta-nicotinamide D-ribonucleotide + 2 H(+). The enzyme catalyses NAD(+) + H2O = beta-nicotinamide D-ribonucleotide + AMP + 2 H(+). It catalyses the reaction NADH + H2O = reduced beta-nicotinamide D-ribonucleotide + AMP + 2 H(+). Functionally, mRNA decapping enzyme that specifically removes the nicotinamide adenine dinucleotide (NAD) cap from a subset of mRNAs by hydrolyzing the diphosphate linkage to produce nicotinamide mononucleotide (NMN) and 5' monophosphate mRNA. The NAD-cap is present at the 5'-end of some mRNAs and stabilizes RNA against 5'-processing. Has preference for mRNAs with a 5'-end purine. Catalyzes the hydrolysis of a broad range of dinucleotide pyrophosphates. In Haemophilus influenzae (strain ATCC 51907 / DSM 11121 / KW20 / Rd), this protein is NAD-capped RNA hydrolase NudC.